A 147-amino-acid chain; its full sequence is Hemoglobin subunit beta (147 aa).

V2 carries the post-translational modification N-acetylvaline. A Globin domain is found at 3–147; that stretch reads HLTGEEKAAV…VANALAHKYH (145 aa). T13 is modified (phosphothreonine). S45 carries the phosphoserine modification. At K60 the chain carries N6-acetyllysine. H64 contacts heme b. N6-acetyllysine is present on K83. Residue H93 participates in heme b binding. An S-nitrosocysteine modification is found at C94. An N6-acetyllysine modification is found at K145.

This sequence belongs to the globin family. Heterotetramer of two alpha chains and two beta chains. In terms of tissue distribution, red blood cells.

Its function is as follows. Involved in oxygen transport from the lung to the various peripheral tissues. This is Hemoglobin subunit beta (HBB) from Ateles belzebuth (White-bellied spider monkey).